Here is a 196-residue protein sequence, read N- to C-terminus: DnaA initiator-associating protein DiaA (196 aa).

The SIS domain maps to 34–196 (LVQSLLNGNK…DNTLFPHQDD (163 aa)).

It belongs to the SIS family. DiaA subfamily. As to quaternary structure, homotetramer; dimer of dimers.

Functionally, required for the timely initiation of chromosomal replication via direct interactions with the DnaA initiator protein. This chain is DnaA initiator-associating protein DiaA, found in Yersinia enterocolitica serotype O:8 / biotype 1B (strain NCTC 13174 / 8081).